The primary structure comprises 341 residues: Cell wall mannoprotein PIR1 (341 aa).

Residues 1 to 18 form the signal peptide; sequence MQYKKSLVASALVATSLA. The propeptide occupies 19–63; the sequence is AYAPKDPWSTLTPSATYKGGITDYSSTFGIAVEPIATTASSKAKR. 8 PIR1/2/3 repeats span residues 64–82, 83–101, 102–120, 126–144, 145–163, 164–182, 183–201, and 202–220; these read AAAISQIGDGQIQATTKTT, AAAVSQIGDGQIQATTKTK, AAAVSQIGDGQIQATTKTT, AAAVSQIGDGQIQATTNTT, and VAPVSQITDGQIQATTLTS.

It belongs to the PIR protein family. Post-translationally, covalently linked to beta-1,3-glucan of the inner cell wall layer via an alkali-sensitive ester linkage between the gamma-carboxyl group of glutamic acids, arising from specific glutamines within the PIR1/2/3 repeats, and hydroxyl groups of glucoses of beta-1,3-glucan chains. O-glycosylated. Extensively O-mannosylated.

It is found in the secreted. It localises to the cell wall. Functionally, component of the outer cell wall layer. Required for stability of the cell wall and for optimal growth. Required for resistance against several antifungal and cell wall-perturbing agents and for tolerance to heat shock. The protein is Cell wall mannoprotein PIR1 (PIR1) of Saccharomyces cerevisiae (strain YJM789) (Baker's yeast).